Reading from the N-terminus, the 273-residue chain is Formamidopyrimidine-DNA glycosylase (273 aa).

Pro2 functions as the Schiff-base intermediate with DNA in the catalytic mechanism. Glu3 (proton donor) is an active-site residue. Lys58 functions as the Proton donor; for beta-elimination activity in the catalytic mechanism. Residues His92, Arg111, and Lys153 each coordinate DNA. The segment at 238-272 (KVYGREGQSCLSCSSTIIKIKHSGRSTFYCKTCQY) adopts an FPG-type zinc-finger fold. Arg262 serves as the catalytic Proton donor; for delta-elimination activity.

This sequence belongs to the FPG family. As to quaternary structure, monomer. The cofactor is Zn(2+).

The enzyme catalyses Hydrolysis of DNA containing ring-opened 7-methylguanine residues, releasing 2,6-diamino-4-hydroxy-5-(N-methyl)formamidopyrimidine.. The catalysed reaction is 2'-deoxyribonucleotide-(2'-deoxyribose 5'-phosphate)-2'-deoxyribonucleotide-DNA = a 3'-end 2'-deoxyribonucleotide-(2,3-dehydro-2,3-deoxyribose 5'-phosphate)-DNA + a 5'-end 5'-phospho-2'-deoxyribonucleoside-DNA + H(+). Functionally, involved in base excision repair of DNA damaged by oxidation or by mutagenic agents. Acts as a DNA glycosylase that recognizes and removes damaged bases. Has a preference for oxidized purines, such as 7,8-dihydro-8-oxoguanine (8-oxoG). Has AP (apurinic/apyrimidinic) lyase activity and introduces nicks in the DNA strand. Cleaves the DNA backbone by beta-delta elimination to generate a single-strand break at the site of the removed base with both 3'- and 5'-phosphates. The sequence is that of Formamidopyrimidine-DNA glycosylase from Rickettsia conorii (strain ATCC VR-613 / Malish 7).